A 438-amino-acid chain; its full sequence is Protein DJ-1 homolog B (438 aa).

The transit peptide at 1-45 (MASSSLCHRYFNKITVTPFFNTKKLHHYSPRRISLRVNRRSFSIS) directs the protein to the chloroplast. PfpI endopeptidase domains lie at 53 to 220 (KKVL…EQLL) and 258 to 424 (PQIL…EKFY).

It belongs to the peptidase C56 family. As to quaternary structure, homodimer.

It localises to the plastid. It is found in the chloroplast. In terms of biological role, may be involved in oxidative stress response. The sequence is that of Protein DJ-1 homolog B (DJ1B) from Arabidopsis thaliana (Mouse-ear cress).